A 509-amino-acid polypeptide reads, in one-letter code: Subtelomeric hrmA-associated cluster protein AFUB_078990 (509 aa).

Its function is as follows. Part of the subtelomeric hrmA-associated cluster (HAC) containing genes that alter the hyphal surface (such as reduced total chitin or increased beta-glucan exposure) and perturb inter-hyphal interactions within the developing biofilms, resulting in a loss of vertically aligned polarized growing filaments. Consequently, this hypoxia-typic morphotype (called H-MORPH) with altered biofilm architecture leads to increased hypoxia fitness, increased host inflammation, rapid disease progression, and mortality in a murine model of invasive aspergillosis. This Aspergillus fumigatus (strain CBS 144.89 / FGSC A1163 / CEA10) (Neosartorya fumigata) protein is Subtelomeric hrmA-associated cluster protein AFUB_078990.